Here is a 2081-residue protein sequence, read N- to C-terminus: RNA1 polyprotein (2081 aa).

2 consecutive transmembrane segments (helical) span residues 481 to 501 (ILLL…IYSV) and 515 to 535 (ISLG…LFNS). One can recognise an SF3 helicase domain in the interval 714-881 (LKEDHTQLQL…PGVEPGPRGV (168 aa)). Residue 741 to 748 (GDSGVGKS) participates in ATP binding. Positions 877–900 (GPRGVDNLEFSEMDNRDSNGEPAY) are disordered. In terms of domain architecture, Peptidase C3 spans 1166–1388 (GAEIPEALEA…ALYADIPHEF (223 aa)). Residues His1210, Glu1255, and Cys1348 each act as for picornain 3C-like protease activity in the active site. One can recognise a RdRp catalytic domain in the interval 1679-1810 (ANHFTGDYSG…SVATPVASVY (132 aa)).

Its subcellular location is the host membrane. It carries out the reaction RNA(n) + a ribonucleoside 5'-triphosphate = RNA(n+1) + diphosphate. Picornain 3C-like protease is a thiol protease that probably cleaves the polyprotein. In Citrus unshiu (Satsuma mandarin), this protein is RNA1 polyprotein.